The following is a 341-amino-acid chain: tRNA dimethylallyltransferase (341 aa).

ATP is bound at residue 15–22 (GPTAAGKT). 17–22 (TAAGKT) lines the substrate pocket. Interaction with substrate tRNA stretches follow at residues 44–47 (DSAL), 168–172 (QRIQR), 253–258 (RCVGYR), and 302–309 (KRQITWLR).

The protein belongs to the IPP transferase family. In terms of assembly, monomer. Mg(2+) serves as cofactor.

The catalysed reaction is adenosine(37) in tRNA + dimethylallyl diphosphate = N(6)-dimethylallyladenosine(37) in tRNA + diphosphate. Catalyzes the transfer of a dimethylallyl group onto the adenine at position 37 in tRNAs that read codons beginning with uridine, leading to the formation of N6-(dimethylallyl)adenosine (i(6)A). The sequence is that of tRNA dimethylallyltransferase from Verminephrobacter eiseniae (strain EF01-2).